Here is a 255-residue protein sequence, read N- to C-terminus: Indole-3-glycerol phosphate synthase (255 aa).

The protein belongs to the TrpC family.

It catalyses the reaction 1-(2-carboxyphenylamino)-1-deoxy-D-ribulose 5-phosphate + H(+) = (1S,2R)-1-C-(indol-3-yl)glycerol 3-phosphate + CO2 + H2O. It participates in amino-acid biosynthesis; L-tryptophan biosynthesis; L-tryptophan from chorismate: step 4/5. This is Indole-3-glycerol phosphate synthase from Streptococcus thermophilus (strain CNRZ 1066).